Reading from the N-terminus, the 226-residue chain is Thymocyte nuclear protein 1 (226 aa).

The disordered stretch occupies residues 1–38; that stretch reads MPRPRKRQAGAAGPDKKQLSGKRTKTENSESASVKLEN. A Nuclear localization signal motif is present at residues 5–10; that stretch reads RKRQAG. Residues 14–28 show a composition bias toward basic and acidic residues; sequence PDKKQLSGKRTKTEN. Residues 29–38 show a composition bias toward polar residues; that stretch reads SESASVKLEN.

Phosphorylated.

It is found in the nucleus. In terms of biological role, specifically binds 5-hydroxymethylcytosine (5hmC), suggesting that it acts as a specific reader of 5hmC. The chain is Thymocyte nuclear protein 1 (Thyn1) from Rattus norvegicus (Rat).